A 265-amino-acid polypeptide reads, in one-letter code: Aquaporin-5 (265 aa).

Over 1 to 12 the chain is Cytoplasmic; the sequence is MKKEVCSLAFLK. Residues 13–33 traverse the membrane as a helical segment; sequence AVFAEFLATLIFVFFGLASAL. Topologically, residues 34-39 are extracellular; that stretch reads KWPSAL. The chain crosses the membrane as a helical span at residues 40–60; it reads PTILQIALAFGLAIGTLAQAL. The Cytoplasmic segment spans residues 61–65; the sequence is GPVSG. Positions 66–74 form an intramembrane region, discontinuously helical; sequence GHINPAITL. Residues 69-71 carry the NPA 1 motif; the sequence is NPA. Over 75–87 the chain is Cytoplasmic; it reads ALLVGNQISLLRA. Residues 88-108 form a helical membrane-spanning segment; that stretch reads VFYVVAQLVGAIAGAGILYGL. Over 109–126 the chain is Extracellular; it reads APGNARGNLAVNSLNNNT. N-linked (GlcNAc...) asparagine glycosylation occurs at Asn124. Residues 127–147 form a helical membrane-spanning segment; sequence TPGQAVVVEMILTFQLALCIF. Topologically, residues 148–158 are cytoplasmic; the sequence is SSTDSRRTSPV. The helical transmembrane segment at 159 to 179 threads the bilayer; it reads GSPALSIGLSVTLGHLVGIYF. Thr180 is a topological domain (extracellular). An intramembrane region (discontinuously helical) is located at residues 181–191; it reads GCSMNPARSFG. The short motif at 185-187 is the NPA 2 element; sequence NPA. At 192-203 the chain is on the extracellular side; it reads PAVVMNRFSPSH. Residues 204-224 traverse the membrane as a helical segment; the sequence is WVFWVGPIVGAAVAAILYFYL. The Cytoplasmic segment spans residues 225–265; the sequence is LFPNSLSLSERVAVVKGTYESEEDWEEQREERKKTMELTAH.

It belongs to the MIP/aquaporin (TC 1.A.8) family. In terms of assembly, homotetramer; each monomer provides an independent water pore. Interacts with TRPV4; the interaction is probably indirect and regulates TRPV4 activation by hypotonicity.

The protein resides in the apical cell membrane. The protein localises to the cell membrane. It is found in the cytoplasmic vesicle membrane. The enzyme catalyses H2O(in) = H2O(out). Aquaporins form homotetrameric transmembrane channels, with each monomer independently mediating water transport across the plasma membrane along its osmotic gradient. Plays an important role in fluid secretion in salivary glands. Required for TRPV4 activation by hypotonicity. Together with TRPV4, controls regulatory volume decrease in salivary epithelial cells. Seems to play a redundant role in water transport in the eye, lung and in sweat glands. This chain is Aquaporin-5, found in Sus scrofa (Pig).